A 325-amino-acid polypeptide reads, in one-letter code: NADH-quinone oxidoreductase subunit H (325 aa).

9 helical membrane passes run 11-31, 50-69, 81-101, 114-134, 154-174, 186-206, 237-257, 265-285, and 304-324; these read ILLS…CGAF, NRVG…KMFF, VIFT…FAIV, IGIL…LFAG, VSYE…AGSF, LWNV…GVAV, FFVG…TLFF, LPPF…FILI, and VCLP…LWQA.

This sequence belongs to the complex I subunit 1 family. NDH-1 is composed of 13 different subunits. Subunits NuoA, H, J, K, L, M, N constitute the membrane sector of the complex.

The protein localises to the cell inner membrane. It carries out the reaction a quinone + NADH + 5 H(+)(in) = a quinol + NAD(+) + 4 H(+)(out). Its function is as follows. NDH-1 shuttles electrons from NADH, via FMN and iron-sulfur (Fe-S) centers, to quinones in the respiratory chain. The immediate electron acceptor for the enzyme in this species is believed to be ubiquinone. Couples the redox reaction to proton translocation (for every two electrons transferred, four hydrogen ions are translocated across the cytoplasmic membrane), and thus conserves the redox energy in a proton gradient. This subunit may bind ubiquinone. This chain is NADH-quinone oxidoreductase subunit H, found in Salmonella agona (strain SL483).